The sequence spans 170 residues: Cathelicidin antimicrobial peptide (170 aa).

Positions 1–30 (MKTQRDSPSLGRWSLVLLLLGLVMPLAIVA) are cleaved as a signal peptide. The propeptide at 31-131 (QVLSYQEAVL…DISCDKDNRR (101 aa)) is cathelin-like domain (CLD). 2 disulfides stabilise this stretch: C86–C97 and C108–C125. The segment at 150–162 (FKRIVQRIKDFLQ) is active core.

It belongs to the cathelicidin family. As to quaternary structure, monomer, homodimer or homotrimer (in vitro). Oligomerizes as tetra- or hexamer in solution (in vitro). Post-translationally, proteolytically cleaved by proteinase PRTN3 into antibacterial peptide LL-37. Proteolytically cleaved by cathepsin CTSG and neutrophil elastase ELANE. Resistant to proteolytic degradation in solution, and when bound to both zwitterionic (mimicking mammalian membranes) and negatively charged membranes (mimicking bacterial membranes). In terms of processing, after secretion onto the skin surface, the CAMP gene product is processed by a serine protease-dependent mechanism into multiple novel antimicrobial peptides distinct from and shorter than cathelicidin LL-37. These peptides show enhanced antimicrobial action, acquiring the ability to kill skin pathogens such as S.aureus, E.coli and C.albicans. These peptides have lost the ability to stimulate CXCL8/IL8 release from keratinocytes. The peptides act synergistically, killing bacteria at lower concentrations when present together, and maintain activity at increased salt condition.

It localises to the secreted. Its subcellular location is the vesicle. Antimicrobial protein that is an integral component of the innate immune system. Binds to bacterial lipopolysaccharides (LPS). Acts via neutrophil N-formyl peptide receptors to enhance the release of CXCL2. Postsecretory processing generates multiple cathelicidin antimicrobial peptides with various lengths which act as a topical antimicrobial defense in sweat on skin. The unprocessed precursor form, cathelicidin antimicrobial peptide, inhibits the growth of Gram-negative E.coli and E.aerogenes with efficiencies comparable to that of the mature peptide LL-37 (in vitro). Its function is as follows. Antimicrobial peptide that is an integral component of the innate immune system. Binds to bacterial lipopolysaccharides (LPS). Causes membrane permeabilization by forming transmembrane pores (in vitro). Causes lysis of E.coli. Exhibits antimicrobial activity against Gram-negative bacteria such as P.aeruginosa, S.typhimurium, E.aerogenes, E.coli and P.syringae, Gram-positive bacteria such as L.monocytogenes, S.epidermidis, S.pyogenes and S.aureus, as well as vancomycin-resistant enterococci (in vitro). Exhibits antimicrobial activity against methicillin-resistant S.aureus, P.mirabilis, and C.albicans in low-salt media, but not in media containing 100 mM NaCl (in vitro). Forms chiral supramolecular assemblies with quinolone signal (PQS) molecules of P.aeruginosa, which may lead to interference of bacterial quorum signaling and perturbance of bacterial biofilm formation. May form supramolecular fiber-like assemblies on bacterial membranes. Induces cytokine and chemokine producation as well as TNF/TNFA and CSF2/GMCSF production in normal human keratinocytes. Exhibits hemolytic activity against red blood cells. In terms of biological role, exhibits antimicrobial activity against E.coli and B.megaterium (in vitro). This Nomascus gabriellae (Red-cheeked gibbon) protein is Cathelicidin antimicrobial peptide.